Here is a 640-residue protein sequence, read N- to C-terminus: SH3 domain-containing protein 21 (640 aa).

The segment at 1 to 60 (MVQSELQLQPRAGGRAEAASWGDRGNDKGGLGNPDMPSVSPGPQRPPKLSSLAYDSPPDY) is disordered. The SH3 domain maps to 65-126 (SHPEVYRVLF…PDNFVLPPPP (62 aa)). 3 disordered regions span residues 133–361 (RKVV…PLGD), 401–551 (YFVA…PDSQ), and 618–640 (VQVM…TQTY). Positions 177-186 (PSRDSQKLTS) are enriched in basic and acidic residues. Residues 210-220 (TQTPQQRSVSS) are compositionally biased toward polar residues. 3 stretches are compositionally biased toward basic and acidic residues: residues 401-416 (YFVA…EAHT), 459-469 (ALEKPHPHEEA), and 494-532 (RPLR…EVPP). The stretch at 572-626 (VDVTSLRGEVESLRRALELMEVQLERKLTDIWEELKSEKEQRRRLEVQVMQGTQK) forms a coiled coil. Polar residues predominate over residues 621 to 640 (MQGTQKSQTPRVIHTQTQTY).

The chain is SH3 domain-containing protein 21 (SH3D21) from Homo sapiens (Human).